The following is a 230-amino-acid chain: MQIHLLIVDALNLIRRIHAVQGSPCVKACQHALQQLIQHSQPSHAVAVFDEDDRSDSWRHQCLPDYKAGRSPMPDNLQQEMPLIRQAFNELGVACWHSPGNEADDLAATLVVKVAGAGHQVTIVSTDKGYCQLLAPNIQIRDYFQKRWLDMPFVKQEFGVLPRQLPDYWGLAGISSSKIPGVAGVGAKTATLLLQQADTLEVLYQNLESIPECQRRMKSDPLISPPTAQY.

D104 lines the Mg(2+) pocket. Positions 160–215 (VLPRQLPDYWGLAGISSSKIPGVAGVGAKTATLLLQQADTLEVLYQNLESIPECQR) constitute a 5'-3' exonuclease domain. Positions 171, 172, 180, 182, and 185 each coordinate K(+). The interval 184-189 (GVGAKT) is interaction with DNA.

The protein belongs to the Xni family. The cofactor is Mg(2+). K(+) is required as a cofactor.

Functionally, has flap endonuclease activity. During DNA replication, flap endonucleases cleave the 5'-overhanging flap structure that is generated by displacement synthesis when DNA polymerase encounters the 5'-end of a downstream Okazaki fragment. This is Flap endonuclease Xni (xni) from Yersinia pestis bv. Antiqua (strain Antiqua).